The chain runs to 209 residues: uncharacterized protein (209 aa).

Transmembrane regions (helical) follow at residues 10-32 (AVVI…YLAF), 37-59 (LRYV…TGLI), and 64-86 (FIYF…ILYV).

It localises to the cell membrane. This is an uncharacterized protein from Aquifex aeolicus (strain VF5).